The following is a 514-amino-acid chain: ATP synthase subunit alpha (514 aa).

170–177 (GDRQIGKT) lines the ATP pocket.

The protein belongs to the ATPase alpha/beta chains family. In terms of assembly, F-type ATPases have 2 components, CF(1) - the catalytic core - and CF(0) - the membrane proton channel. CF(1) has five subunits: alpha(3), beta(3), gamma(1), delta(1), epsilon(1). CF(0) has three main subunits: a(1), b(2) and c(9-12). The alpha and beta chains form an alternating ring which encloses part of the gamma chain. CF(1) is attached to CF(0) by a central stalk formed by the gamma and epsilon chains, while a peripheral stalk is formed by the delta and b chains.

Its subcellular location is the cell inner membrane. The catalysed reaction is ATP + H2O + 4 H(+)(in) = ADP + phosphate + 5 H(+)(out). Produces ATP from ADP in the presence of a proton gradient across the membrane. The alpha chain is a regulatory subunit. This is ATP synthase subunit alpha from Marinobacter nauticus (strain ATCC 700491 / DSM 11845 / VT8) (Marinobacter aquaeolei).